Reading from the N-terminus, the 26-residue chain is Melittin (26 aa).

Glycine 1 bears the N-formylglycine; partial mark. Glutamate 26 carries the post-translational modification Glutamic acid 1-amide.

Belongs to the melittin family. Monomer (in solution and for integration into membranes), homotetramer (in solution and potentially as a toroidal pore in membranes), and potenially homomultimer (as a toroidal pore in membranes). As to expression, expressed by the venom gland.

The protein localises to the secreted. It is found in the target cell membrane. Its function is as follows. Main toxin of bee venom with strong hemolytic activity and antimicrobial activity. It has enhancing effects on bee venom phospholipase A2 activity. This amphipathic toxin binds to negatively charged membrane surface and forms pore by inserting into lipid bilayers inducing the leakage of ions and molecules and the enhancement of permeability that ultimately leads to cell lysis. It acts as a voltage-gated pore with higher selectivity for anions over cations. The ion conductance has been shown to be voltage-dependent. Self-association of melittin in membranes is promoted by high ionic strength, but not by the presence of negatively charged lipids. In vivo, intradermal injection into healthy human volunteers produce sharp pain sensation and an inflammatory response. It produces pain by activating primary nociceptor cells directly and indirectly due to its ability to activate plasma membrane phospholipase A2 and its pore-forming activity. This Apis dorsata (Giant honeybee) protein is Melittin (MELT).